The primary structure comprises 644 residues: Zinc transporter ZIP4 (644 aa).

The N-terminal stretch at 1–27 is a signal peptide; it reads MAILAWLEPRPLLAVLVLVLTMRMAQP. The Extracellular segment spans residues 28 to 323; it reads AHLLTLLSSG…QNQLSQAEKY (296 aa). Disulfide bonds link Cys59–Cys64, Cys67–Cys103, and Cys153–Cys188. Residues 231–259 are disordered; sequence TETHSDHHHQEKRVNRQGPTPLTAPNSSS. The span at 233–244 shows a compositional bias: basic and acidic residues; the sequence is THSDHHHQEKRV. Residues 247–259 show a composition bias toward polar residues; that stretch reads QGPTPLTAPNSSS. An intrachain disulfide couples Cys266 to Cys305. A helical transmembrane segment spans residues 324–344; it reads LYGSLATLLICLCSTFGLLLL. At 345 to 355 the chain is on the cytoplasmic side; sequence TCAACSTAAHY. Residues 356 to 376 form a helical membrane-spanning segment; sequence VIQTFLGMAVGALTGDALLHL. Over 377-404 the chain is Extracellular; it reads TPKVLGLHQHGGDSEHRADSHGPQTTWR. Residues 405–425 form a helical membrane-spanning segment; it reads LVVALSGLYVFFLFEKLCDLL. Topologically, residues 426-495 are cytoplasmic; the sequence is LPQDPEDRKG…KSPELRLLPY (70 aa). Residues 449–451 carry the Essential for SLC39A4 endocytosis motif; that stretch reads LQL. Over residues 456–467 the composition is skewed to basic and acidic residues; sequence LRPPKQPHEGSR. The disordered stretch occupies residues 456-484; it reads LRPPKQPHEGSRADLVAEESPELLSPEPR. A helical transmembrane segment spans residues 496 to 515; sequence MITLGDGLHNFADGLAVGAA. Zn(2+) is bound by residues His504, Asn505, and Asp508. Residues 516–523 lie on the Extracellular side of the membrane; that stretch reads FASSWKTG. The helical transmembrane segment at 524 to 550 threads the bilayer; the sequence is LATSLAVFCHEVPHELGDFAALLHAGL. Positions 533, 534, and 537 each coordinate Zn(2+). The Cytoplasmic portion of the chain corresponds to 551 to 555; that stretch reads PVSRA. A helical transmembrane segment spans residues 556–576; sequence LLLNLASGLTAFAGLYVALAL. Over 577–583 the chain is Extracellular; the sequence is GVGEESE. Residues 584-604 form a helical membrane-spanning segment; the sequence is SWTLAVAIGLFLYVALCDMLP. Residues 605–614 lie on the Cytoplasmic side of the membrane; sequence AMLNVRDPRP. The chain crosses the membrane as a helical span at residues 615–635; it reads WLLFLLHNVGLLGGWAVLLLL. At 636-644 the chain is on the extracellular side; that stretch reads SLYEDSIAL.

It belongs to the ZIP transporter (TC 2.A.5) family. In terms of assembly, homodimer. Post-translationally, the extracellular N-terminal ectodomain is cleaved when cells are Zn(2+) deficient, N-terminally cleaved SLC39A4 is internalized at a faster rate. In terms of processing, under excess Zn(2+) conditions, SLC39A4 on the cell surface is rapidly endocytosed, ubiquitinated and degraded. Glycosylated.

The protein localises to the cell membrane. It localises to the recycling endosome membrane. It is found in the apical cell membrane. It catalyses the reaction Zn(2+)(in) = Zn(2+)(out). In terms of biological role, selective transporter that mediates the uptake of Zn(2+). Plays an essential role for dietary zinc uptake from small intestine. The Zn(2+) uniporter activity is regulated by zinc availability. Also exhibits polyspecific binding and transport of Cu(2+), Cd(2+) and possibly Ni(2+) but at higher concentrations. The protein is Zinc transporter ZIP4 of Pteropus alecto (Black flying fox).